We begin with the raw amino-acid sequence, 416 residues long: 2-aminoadipate transaminase (416 aa).

Pyridoxal 5'-phosphate-binding positions include 102 to 103 (GA) and Q233. K259 carries the N6-(pyridoxal phosphate)lysine modification. Residue T288 coordinates pyridoxal 5'-phosphate.

The protein belongs to the class-III pyridoxal-phosphate-dependent aminotransferase family. Requires pyridoxal 5'-phosphate as cofactor.

The enzyme catalyses L-2-aminoadipate + 2-oxoglutarate = 2-oxoadipate + L-glutamate. The catalysed reaction is 5-aminopentanoate + 2-oxoglutarate = 5-oxopentanoate + L-glutamate. Its pathway is amino-acid degradation. Catalyzes the conversion of 2-aminoadipate (2AA) to 2-oxoadipate (2OA). Is most active on L-2-aminoadipate (L-2AA) and shows only weak activity on the enantiomer, D-2-aminoadipate (D-2AA). Shows moderate activity on 5-aminovalerate (5AVA) and weak activity toward 4-aminobutyrate (GABA). Is involved in a D-lysine catabolic pathway. In Pseudomonas putida (strain ATCC 47054 / DSM 6125 / CFBP 8728 / NCIMB 11950 / KT2440), this protein is 2-aminoadipate transaminase.